The chain runs to 86 residues: Large ribosomal subunit protein uL23 (86 aa).

The protein belongs to the universal ribosomal protein uL23 family. In terms of assembly, part of the 50S ribosomal subunit. Contacts protein L29.

In terms of biological role, binds to 23S rRNA. One of the proteins that surrounds the polypeptide exit tunnel on the outside of the ribosome. The sequence is that of Large ribosomal subunit protein uL23 from Methanococcus vannielii (strain ATCC 35089 / DSM 1224 / JCM 13029 / OCM 148 / SB).